The primary structure comprises 182 residues: ATP synthase subunit delta (182 aa).

It belongs to the ATPase delta chain family. In terms of assembly, F-type ATPases have 2 components, F(1) - the catalytic core - and F(0) - the membrane proton channel. F(1) has five subunits: alpha(3), beta(3), gamma(1), delta(1), epsilon(1). CF(0) has four main subunits: a(1), b(1), b'(1) and c(10-14). The alpha and beta chains form an alternating ring which encloses part of the gamma chain. F(1) is attached to F(0) by a central stalk formed by the gamma and epsilon chains, while a peripheral stalk is formed by the delta, b and b' chains.

It localises to the cellular thylakoid membrane. Functionally, f(1)F(0) ATP synthase produces ATP from ADP in the presence of a proton or sodium gradient. F-type ATPases consist of two structural domains, F(1) containing the extramembraneous catalytic core and F(0) containing the membrane proton channel, linked together by a central stalk and a peripheral stalk. During catalysis, ATP synthesis in the catalytic domain of F(1) is coupled via a rotary mechanism of the central stalk subunits to proton translocation. In terms of biological role, this protein is part of the stalk that links CF(0) to CF(1). It either transmits conformational changes from CF(0) to CF(1) or is implicated in proton conduction. This Synechococcus sp. (strain CC9605) protein is ATP synthase subunit delta.